The chain runs to 121 residues: Putative viral protein-binding protein C1 (121 aa).

The tract at residues 21 to 57 (PWDRTRGHPDVPWRNLTSSPTRPLAQPAGSCMPAEPS) is disordered.

Interacts with core protein of hepatitis B virus.

The polypeptide is Putative viral protein-binding protein C1 (Homo sapiens (Human)).